The primary structure comprises 614 residues: Spastin (614 aa).

Positions 1–45 (MNSPGGRGKKKGSGGPSSPVPPRPPPPCQARSRPAPKPAPPPQSP) are disordered. A required for nuclear localization region spans residues 1–50 (MNSPGGRGKKKGSGGPSSPVPPRPPPPCQARSRPAPKPAPPPQSPHKRNL). The Cytoplasmic portion of the chain corresponds to 1-56 (MNSPGGRGKKKGSGGPSSPVPPRPPPPCQARSRPAPKPAPPPQSPHKRNLYYFSYP). The segment at 1–80 (MNSPGGRGKK…LGLLFVWLCQ (80 aa)) is required for interaction with ATL1. Residues 1-192 (MNSPGGRGKK…LVMAKDRLQL (192 aa)) form a required for midbody localization region. The interval 1–298 (MNSPGGRGKK…STPKTNRTNK (298 aa)) is required for interaction with RTN1. The Nuclear localization signal motif lies at 4 to 11 (PGGRGKKK). Pro residues-rich tracts occupy residues 18 to 28 (SPVPPRPPPPC) and 35 to 44 (APKPAPPPQS). The interval 50–87 (LYYFSYPLFLGFALLRLVAFHLGLLFVWLCQRFSRALM) is required for interaction with SSNA1 and microtubules. The helical intramembrane region spans 57 to 77 (LFLGFALLRLVAFHLGLLFVW). Residues 59-67 (LGFALLRLV) carry the Nuclear export signal motif. At 78 to 614 (LCQRFSRALM…WNKDFGDTTV (537 aa)) the chain is on the cytoplasmic side. Residues 110-194 (EAERVRAFHK…MAKDRLQLLE (85 aa)) form a sufficient for interaction with CHMP1B region. The interval 112 to 198 (ERVRAFHKQA…RLQLLEKLQP (87 aa)) is required for interaction with microtubules. Residues 118 to 193 (HKQAFEYISV…VMAKDRLQLL (76 aa)) form the MIT domain. Positions 220 to 310 (NGHLQSESGA…TPTTAARKKK (91 aa)) are disordered. Positions 226–614 (ESGAVPKRKD…WNKDFGDTTV (389 aa)) are sufficient for microtubule severing. Phosphoserine occurs at positions 243 and 266. The interval 268-326 (SGLSMVSGVRQGPGSAAATHKSTPKTNRTNKPSTPTTAARKKKDLKNFRNVDSNLANLI) is required for interaction with microtubules and microtubule severing. Residues 287 to 304 (HKSTPKTNRTNKPSTPTT) are compositionally biased toward polar residues. T304 carries the post-translational modification Phosphothreonine. Positions 307-310 (RKKK) match the Nuclear localization signal motif. Residue 380 to 387 (GPPGNGKT) participates in ATP binding. The residue at position 595 (S595) is a Phosphoserine.

This sequence belongs to the AAA ATPase family. Spastin subfamily. In terms of assembly, homohexamer. Mostly monomeric, but assembles into hexameric structure for short periods of time. Oligomerization seems to be a prerequisite for catalytic activity. Binding to ATP in a cleft between two adjacent subunits stabilizes the homohexameric form. Binds to microtubules at least in part via the alpha-tubulin and beta-tubulin tails. The hexamer adopts a ring conformation through which microtubules pass prior to being severed. Does not interact strongly with tubulin heterodimers. Interacts (via MIT domain) with CHMP1B; the interaction is direct. Interacts with SSNA1. Interacts with ATL1. Interacts with RTN1. Interacts with ZFYVE27. Interacts with REEP1. Interacts (via MIT domain) with IST1.

The protein localises to the membrane. The protein resides in the endoplasmic reticulum. It is found in the midbody. Its subcellular location is the cytoplasm. It localises to the cytoskeleton. The protein localises to the microtubule organizing center. The protein resides in the centrosome. It is found in the perinuclear region. Its subcellular location is the nucleus. It localises to the spindle. The protein localises to the cell projection. The protein resides in the axon. The catalysed reaction is n ATP + n H2O + a microtubule = n ADP + n phosphate + (n+1) alpha/beta tubulin heterodimers.. Its activity is regulated as follows. Allosteric enzyme with a cooperative mechanism; at least two neighbor subunits influence each other strongly in spastin hexamers. Microtubule binding promotes cooperative interactions among spastin subunits. In terms of biological role, ATP-dependent microtubule severing protein that specifically recognizes and cuts microtubules that are polyglutamylated. Preferentially recognizes and acts on microtubules decorated with short polyglutamate tails: severing activity increases as the number of glutamates per tubulin rises from one to eight, but decreases beyond this glutamylation threshold. Severing activity is not dependent on tubulin acetylation or detyrosination. Microtubule severing promotes reorganization of cellular microtubule arrays and the release of microtubules from the centrosome following nucleation. It is critical for the biogenesis and maintenance of complex microtubule arrays in axons, spindles and cilia. SPAST is involved in abscission step of cytokinesis and nuclear envelope reassembly during anaphase in cooperation with the ESCRT-III complex. Recruited at the midbody, probably by IST1, and participates in membrane fission during abscission together with the ESCRT-III complex. Recruited to the nuclear membrane by IST1 and mediates microtubule severing, promoting nuclear envelope sealing and mitotic spindle disassembly during late anaphase. Required for membrane traffic from the endoplasmic reticulum (ER) to the Golgi and endosome recycling. Recruited by IST1 to endosomes and regulates early endosomal tubulation and recycling by mediating microtubule severing. Probably plays a role in axon growth and the formation of axonal branches. This is Spastin from Bos taurus (Bovine).